Consider the following 345-residue polypeptide: uncharacterized protein (345 aa).

2 disordered regions span residues 1–58 (MPSP…WRGD) and 139–165 (KTNS…NSPK). The segment covering 27–39 (IKGEGSDDGKEKS) has biased composition (basic and acidic residues). The segment covering 154–165 (KQGSAESKNSPK) has biased composition (polar residues).

It belongs to the MG307/MG309/MG338 family.

This is an uncharacterized protein from Mycoplasma pneumoniae (strain ATCC 29342 / M129 / Subtype 1) (Mycoplasmoides pneumoniae).